A 179-amino-acid polypeptide reads, in one-letter code: Small heat shock protein hspK (179 aa).

Residues 32–178 (HRINIWRPTV…DRLKIPIQSK (147 aa)) form the sHSP domain. Residues 80–122 (KKSKGGLNNLPSSSSSINSDSTTNTNTNTTTTTTTAPPPPSDA) are disordered. Residues 87 to 114 (NNLPSSSSSINSDSTTNTNTNTTTTTTT) are compositionally biased toward low complexity.

This sequence belongs to the small heat shock protein (HSP20) family.

The polypeptide is Small heat shock protein hspK (hspK) (Dictyostelium discoideum (Social amoeba)).